The primary structure comprises 64 residues: MAQEQTKRGGGGDDEDDFASSTAAGQERREKLAEDTDDLLDEIDDVLEENAEDFVRAYVQKGGQ.

Basic and acidic residues predominate over residues Met-1 to Gly-11. Residues Met-1–Asp-37 are disordered. The interval Ser-21–Tyr-58 is ARC ATPase binding. Positions Ala-24–Glu-52 form a coiled coil. Deamidated glutamine is present on Gln-64. Residue Gln-64 forms an Isoglutamyl lysine isopeptide (Gln-Lys) (interchain with K-? in acceptor proteins) linkage.

It belongs to the prokaryotic ubiquitin-like protein family. Strongly interacts with the proteasome-associated ATPase ARC through a hydrophobic interface; the interacting region of Pup lies in its C-terminal half. There is one Pup binding site per ARC hexamer ring. Is modified by deamidation of its C-terminal glutamine to glutamate by the deamidase Dop, a prerequisite to the subsequent pupylation process.

It functions in the pathway protein degradation; proteasomal Pup-dependent pathway. Its function is as follows. Protein modifier that is covalently attached to lysine residues of substrate proteins, thereby targeting them for proteasomal degradation. The tagging system is termed pupylation. This is Prokaryotic ubiquitin-like protein Pup from Mycolicibacterium paratuberculosis (strain ATCC BAA-968 / K-10) (Mycobacterium paratuberculosis).